We begin with the raw amino-acid sequence, 651 residues long: Aspartate--tRNA ligase, mitochondrial (651 aa).

The N-terminal 44 residues, Met-1–Phe-44, are a transit peptide targeting the mitochondrion. Thr-216 bears the Phosphothreonine mark. Residue Ser-239 is modified to Phosphoserine. The aspartate stretch occupies residues Gln-241–Lys-244. Arg-263 is an L-aspartate binding site. Residue Arg-263–Glu-265 participates in ATP binding. An N6-acetyllysine modification is found at Lys-379. Glu-532 is a binding site for ATP. Residue Arg-539 coordinates L-aspartate. Gly-581 to Arg-584 serves as a coordination point for ATP.

It belongs to the class-II aminoacyl-tRNA synthetase family. Type 1 subfamily. Homodimer.

Its subcellular location is the mitochondrion matrix. The protein localises to the mitochondrion membrane. It catalyses the reaction tRNA(Asp) + L-aspartate + ATP = L-aspartyl-tRNA(Asp) + AMP + diphosphate. Catalyzes the attachment of aspartate to tRNA(Asp) in a two-step reaction: aspartate is first activated by ATP to form Asp-AMP and then transferred to the acceptor end of tRNA(Asp). This chain is Aspartate--tRNA ligase, mitochondrial (DARS2), found in Bos taurus (Bovine).